The chain runs to 189 residues: Elongation factor P (189 aa).

This sequence belongs to the elongation factor P family.

It is found in the cytoplasm. The protein operates within protein biosynthesis; polypeptide chain elongation. In terms of biological role, involved in peptide bond synthesis. Stimulates efficient translation and peptide-bond synthesis on native or reconstituted 70S ribosomes in vitro. Probably functions indirectly by altering the affinity of the ribosome for aminoacyl-tRNA, thus increasing their reactivity as acceptors for peptidyl transferase. The protein is Elongation factor P of Rhizobium etli (strain CIAT 652).